The chain runs to 302 residues: MTTPQFGSQRSDDDNWDIVSSVGYTALLVAGWRALHAVSPRPLVRDDYAKTFIAASGDPYLTGVLANPGTSEDELAFPRLYGVQTRFFDDFFDAAGAAGIRQAVIIAAGLDSRAYRLEWPPATTVFEVDLAKVLEFKARVLGEQGAVPKARRVEVAADLRADWSRPLEAAGFDVESPSAWSVEGLLPYLTDEAQHALFTRISGLSAPGSRIAIGALGSRLDHDQLHALEESHPGVDVSGNVDFSALTYEPQSDPAEWLAAHGWVVDPVRNTLDLQAGYGMTPPEVDVKIDGFMRSQYITAAR.

S-adenosyl-L-methionine contacts are provided by residues Asp129 and 158–159 (DL).

It belongs to the UPF0677 family.

Exhibits S-adenosyl-L-methionine-dependent methyltransferase activity. This chain is Putative S-adenosyl-L-methionine-dependent methyltransferase MAV_2803, found in Mycobacterium avium (strain 104).